The following is a 360-amino-acid chain: MLVYLAEYLTRFYTGFNVFSYVTFRAILGLLTALIFSLWWGPKLIERLQLLQIGQVVRNDGPESHFSKRGTPTMGGLLILAAIFISVLLWGDLGSRYVWVMLFVLGSFGLIGFIDDYRKVVRKDTKGLIARWKYILQSLAALLIAFFLYATAANPGETQLVVPFFKDVMPQLGGVFIVLAYFTIVGSSNAVNLTDGLDGLAIMPTVMVAAAFALIAYLSGHVQFANYLHIPHLPGSGELVIVCTAIVGAGLGFLWFNTYPAQVFMGDVGSLSLGAALGAIAVLVRQEILLVIMGGVFVMETVSVILQVGSYKLRGQRIFRMAPIHHHYELKGWPEPRVIVRFWIISIFLVLLGLATLKLR.

10 consecutive transmembrane segments (helical) span residues 26–46, 74–94, 97–117, 134–154, 168–188, 199–219, 236–256, 263–283, 288–308, and 338–358; these read AILGLLTALIFSLWWGPKLIE, MGGLLILAAIFISVLLWGDLG, YVWVMLFVLGSFGLIGFIDDY, YILQSLAALLIAFFLYATAAN, VMPQLGGVFIVLAYFTIVGSS, GLAIMPTVMVAAAFALIAYLS, SGELVIVCTAIVGAGLGFLWF, VFMGDVGSLSLGAALGAIAVL, ILLVIMGGVFVMETVSVILQV, and VIVRFWIISIFLVLLGLATLK.

It belongs to the glycosyltransferase 4 family. MraY subfamily. Mg(2+) serves as cofactor.

The protein resides in the cell inner membrane. The enzyme catalyses UDP-N-acetyl-alpha-D-muramoyl-L-alanyl-gamma-D-glutamyl-meso-2,6-diaminopimeloyl-D-alanyl-D-alanine + di-trans,octa-cis-undecaprenyl phosphate = di-trans,octa-cis-undecaprenyl diphospho-N-acetyl-alpha-D-muramoyl-L-alanyl-D-glutamyl-meso-2,6-diaminopimeloyl-D-alanyl-D-alanine + UMP. It functions in the pathway cell wall biogenesis; peptidoglycan biosynthesis. Its function is as follows. Catalyzes the initial step of the lipid cycle reactions in the biosynthesis of the cell wall peptidoglycan: transfers peptidoglycan precursor phospho-MurNAc-pentapeptide from UDP-MurNAc-pentapeptide onto the lipid carrier undecaprenyl phosphate, yielding undecaprenyl-pyrophosphoryl-MurNAc-pentapeptide, known as lipid I. In Shewanella putrefaciens (strain CN-32 / ATCC BAA-453), this protein is Phospho-N-acetylmuramoyl-pentapeptide-transferase.